A 248-amino-acid chain; its full sequence is Aspartate/glutamate leucyltransferase (248 aa).

This sequence belongs to the R-transferase family. Bpt subfamily.

It localises to the cytoplasm. It catalyses the reaction N-terminal L-glutamyl-[protein] + L-leucyl-tRNA(Leu) = N-terminal L-leucyl-L-glutamyl-[protein] + tRNA(Leu) + H(+). The enzyme catalyses N-terminal L-aspartyl-[protein] + L-leucyl-tRNA(Leu) = N-terminal L-leucyl-L-aspartyl-[protein] + tRNA(Leu) + H(+). Functions in the N-end rule pathway of protein degradation where it conjugates Leu from its aminoacyl-tRNA to the N-termini of proteins containing an N-terminal aspartate or glutamate. The sequence is that of Aspartate/glutamate leucyltransferase from Methylobacterium nodulans (strain LMG 21967 / CNCM I-2342 / ORS 2060).